The following is a 582-amino-acid chain: uncharacterized protein (582 aa).

A run of 12 helical transmembrane segments spans residues 29–49 (LFIV…FAAL), 117–137 (ISAP…MGLA), 155–175 (VWAT…MIIV), 225–245 (YVYI…YFLL), 254–274 (FISI…YLLI), 287–307 (ATVI…IVLI), 329–349 (YLYL…ALSV), 376–396 (SIFG…WGLI), 432–452 (IVYL…LFNI), 458–478 (LVVS…IALS), 491–511 (IGMA…PVFF), and 523–543 (IYLY…GNWI).

The protein localises to the cell membrane. This is an uncharacterized protein from Mycoplasmoides gallisepticum (strain R(low / passage 15 / clone 2)) (Mycoplasma gallisepticum).